The chain runs to 575 residues: Cyclic nucleotide-gated channel alpha-4 (575 aa).

Residues 1–38 are Cytoplasmic-facing; it reads MSQDSKVKTTESTPPAPTKARKWLPVLDPSGDYYYWWL. Residues 39–60 form a helical membrane-spanning segment; sequence NTMVFPIMYNLIIVVCRACFPD. The Extracellular portion of the chain corresponds to 61–70; the sequence is LQHSYLVAWF. Residues 71–91 traverse the membrane as a helical segment; sequence VLDYTSDLLYLLDIGVRFHTG. Over 92 to 116 the chain is Cytoplasmic; it reads FLEQGILVVDKSMIASRYVRTWSFL. Residues 117–135 form a helical membrane-spanning segment; that stretch reads LDLASLVPTDAAYVQLGPH. Over 136–140 the chain is Extracellular; that stretch reads IPTLR. The helical transmembrane segment at 141–159 threads the bilayer; it reads LNRFLRVPRLFEAFDRTET. Residues 160–166 are Cytoplasmic-facing; that stretch reads RTAYPNA. The tract at residues 164–272 is ion conduction pathway; that stretch reads PNAFRIAKLM…GSMSSVIYNM (109 aa). The helical transmembrane segment at 167-190 threads the bilayer; the sequence is FRIAKLMIYIFVVIHWNSCLYFAL. The Extracellular segment spans residues 191 to 213; sequence SRYLGFGRDAWVYPDPAQPGFER. 2 helical membrane passes run 214–248 and 249–273; these read LRRQ…LFMV and GDFL…YNMN. The tract at residues 231–234 is selectivity filter; that stretch reads TVGD. The tract at residues 274–350 is C-linker; the sequence is TADAAFYPDH…STLSRVQIFQ (77 aa). Residues 274-575 lie on the Cytoplasmic side of the membrane; it reads TADAAFYPDH…AGQEGPSGLE (302 aa). Positions 292–302 match the IQ-type motif; that stretch reads LQHVNRRLERR. 348-471 is a binding site for a nucleoside 3',5'-cyclic phosphate; sequence IFQNCEASLL…AVMEEKGREI (124 aa). A cyclic nucleotide-binding domain region spans residues 354–474; that stretch reads ASLLEELVLK…EEKGREILLK (121 aa). 3',5'-cyclic GMP-binding residues include Gly414, Ser417, Arg430, and Thr431. 3',5'-cyclic AMP-binding residues include Arg430 and Thr431. Residues 493–547 adopt a coiled-coil conformation; that stretch reads TESRLKGLDQQLDDLQTKFARLLAELESSALKIAYRIERLEWQTREWPMPDDMGE. Positions 536–575 are disordered; that stretch reads TREWPMPDDMGEADDEAEPGEGTSKDGEEKAGQEGPSGLE. Residues 544 to 554 are compositionally biased toward acidic residues; that stretch reads DMGEADDEAEP. The span at 558-567 shows a compositional bias: basic and acidic residues; sequence TSKDGEEKAG.

The protein belongs to the cyclic nucleotide-gated cation channel (TC 1.A.1.5) family. CNGA4 subfamily. The olfactory cyclic nucleotide-gated channel is an heterotetramer composed of CNGA2, CNGA4 and CNGB1b subunits with 2:1:1 stoichiometry. As to expression, expressed in the olfactory epithelium.

Its subcellular location is the cell projection. The protein resides in the cilium membrane. The catalysed reaction is Ca(2+)(in) = Ca(2+)(out). The enzyme catalyses Na(+)(in) = Na(+)(out). It catalyses the reaction K(+)(in) = K(+)(out). It carries out the reaction NH4(+)(in) = NH4(+)(out). The catalysed reaction is Rb(+)(in) = Rb(+)(out). The enzyme catalyses Li(+)(in) = Li(+)(out). It catalyses the reaction Cs(+)(in) = Cs(+)(out). Its activity is regulated as follows. Ca(2+)-calmodulin exerts its inhibitory effect in cAMP sensitivity by binding to IQ-like motif of CNGA4 and preferably binds to the channel in the closed state. Inhibition by PIP3 of the CNG channel probably occurs via CGNA2 binding. Pore-forming subunit of the olfactory cyclic nucleotide-gated channel. Operates in the cilia of olfactory sensory neurons where chemical stimulation of the odorant is converted to an electrical signal. Mediates odorant-induced cAMP-dependent Ca(2+) influx triggering neuron depolarization. The rise of intracellular Ca(2+) levels potentiates the olfactory response by activating Ca(2+)-dependent Cl(-) channels, but it also serves as a negative feedback signal to desensitize the channel for rapid adaptation to odorants. Conducts cGMP- and cAMP-gated ion currents, with permeability for monovalent and divalent cations. Conducts cAMP- and cGMP-gated ion currents, with permeability for monovalent and divalent cations. May conduct nitric oxide-gated Ca(2+) currents relevant to neurons of vomeronasal organ, a system involved in the perception of pheromones. This Mus musculus (Mouse) protein is Cyclic nucleotide-gated channel alpha-4.